The chain runs to 114 residues: Protein LLP homolog (114 aa).

2 stretches are compositionally biased toward basic residues: residues 1–21 (MAKSLRSKWKRKMRAEKRKKN) and 91–108 (QRKKLKAQRLKGKKKSKL). 2 disordered regions span residues 1 to 23 (MAKSLRSKWKRKMRAEKRKKNAP) and 91 to 114 (QRKKLKAQRLKGKKKSKLPKGLAW).

It belongs to the learning-associated protein family.

Its subcellular location is the nucleus. The protein localises to the nucleolus. It localises to the chromosome. In terms of biological role, regulates dendritic and spine growth and synaptic transmission. In Gallus gallus (Chicken), this protein is Protein LLP homolog (LLPH).